The primary structure comprises 701 residues: Methionine--tRNA ligase (701 aa).

Positions 13–23 (PYANGSIHLGH) match the 'HIGH' region motif. Zn(2+) is bound by residues Cys144, Cys147, Cys157, and Cys160. The short motif at 336 to 340 (KMSKS) is the 'KMSKS' region element. Position 339 (Lys339) interacts with ATP. The region spanning 600 to 701 (DFSKIDLRIA…SGAQPGMRVK (102 aa)) is the tRNA-binding domain.

The protein belongs to the class-I aminoacyl-tRNA synthetase family. MetG type 1 subfamily. As to quaternary structure, homodimer. It depends on Zn(2+) as a cofactor.

The protein localises to the cytoplasm. The enzyme catalyses tRNA(Met) + L-methionine + ATP = L-methionyl-tRNA(Met) + AMP + diphosphate. In terms of biological role, is required not only for elongation of protein synthesis but also for the initiation of all mRNA translation through initiator tRNA(fMet) aminoacylation. This Nitrosomonas eutropha (strain DSM 101675 / C91 / Nm57) protein is Methionine--tRNA ligase.